The following is a 174-amino-acid chain: UPF0340 protein SH0921 (174 aa).

The protein belongs to the UPF0340 family.

The protein is UPF0340 protein SH0921 of Staphylococcus haemolyticus (strain JCSC1435).